We begin with the raw amino-acid sequence, 556 residues long: Dihydroxy-acid dehydratase (556 aa).

Mg(2+) is bound at residue Asp-81. Cys-122 is a binding site for [2Fe-2S] cluster. Mg(2+) is bound by residues Asp-123 and Lys-124. Lys-124 is subject to N6-carboxylysine. Position 196 (Cys-196) interacts with [2Fe-2S] cluster. Glu-444 is a Mg(2+) binding site. Catalysis depends on Ser-470, which acts as the Proton acceptor.

It belongs to the IlvD/Edd family. In terms of assembly, homodimer. [2Fe-2S] cluster serves as cofactor. The cofactor is Mg(2+).

It catalyses the reaction (2R)-2,3-dihydroxy-3-methylbutanoate = 3-methyl-2-oxobutanoate + H2O. The catalysed reaction is (2R,3R)-2,3-dihydroxy-3-methylpentanoate = (S)-3-methyl-2-oxopentanoate + H2O. It functions in the pathway amino-acid biosynthesis; L-isoleucine biosynthesis; L-isoleucine from 2-oxobutanoate: step 3/4. It participates in amino-acid biosynthesis; L-valine biosynthesis; L-valine from pyruvate: step 3/4. Functionally, functions in the biosynthesis of branched-chain amino acids. Catalyzes the dehydration of (2R,3R)-2,3-dihydroxy-3-methylpentanoate (2,3-dihydroxy-3-methylvalerate) into 2-oxo-3-methylpentanoate (2-oxo-3-methylvalerate) and of (2R)-2,3-dihydroxy-3-methylbutanoate (2,3-dihydroxyisovalerate) into 2-oxo-3-methylbutanoate (2-oxoisovalerate), the penultimate precursor to L-isoleucine and L-valine, respectively. The chain is Dihydroxy-acid dehydratase from Syntrophotalea carbinolica (strain DSM 2380 / NBRC 103641 / GraBd1) (Pelobacter carbinolicus).